We begin with the raw amino-acid sequence, 96 residues long: Large ribosomal subunit protein eL14 (96 aa).

It belongs to the eukaryotic ribosomal protein eL14 family.

The protein is Large ribosomal subunit protein eL14 of Saccharolobus islandicus (strain Y.N.15.51 / Yellowstone #2) (Sulfolobus islandicus).